The following is a 198-amino-acid chain: Peroxiredoxin-2 (198 aa).

At A2 the chain carries N-acetylalanine. The 159-residue stretch at 6–164 (ARIGKPAPDF…ALRLVQAFQY (159 aa)) folds into the Thioredoxin domain. Catalysis depends on C51, which acts as the Cysteine sulfenic acid (-SOH) intermediate. S112 carries the phosphoserine modification. Phosphothreonine is present on T182. An N6-acetyllysine modification is found at K196.

Belongs to the peroxiredoxin family. AhpC/Prx1 subfamily. As to quaternary structure, homodimer; disulfide-linked, upon oxidation. 5 homodimers assemble to form a ring-like decamer. Interacts with TIPIN. In terms of processing, the enzyme can be inactivated by further oxidation of the cysteine sulfenic acid (C(P)-SOH) to sulphinic acid (C(P)-SO2H) instead of its condensation to a disulfide bond. It can be reactivated by forming a transient disulfide bond with sulfiredoxin SRXN1, which reduces the cysteine sulfinic acid in an ATP- and Mg-dependent manner. Acetylation increases resistance to transition to high molecular-mass complexes. Deacetylated by HDAC6 which decreases reducing activity.

The protein localises to the cytoplasm. It catalyses the reaction a hydroperoxide + [thioredoxin]-dithiol = an alcohol + [thioredoxin]-disulfide + H2O. In terms of biological role, thiol-specific peroxidase that catalyzes the reduction of hydrogen peroxide and organic hydroperoxides to water and alcohols, respectively. Plays a role in cell protection against oxidative stress by detoxifying peroxides and as sensor of hydrogen peroxide-mediated signaling events. Might participate in the signaling cascades of growth factors and tumor necrosis factor-alpha by regulating the intracellular concentrations of H(2)O(2). The sequence is that of Peroxiredoxin-2 (PRDX2) from Macaca fascicularis (Crab-eating macaque).